The primary structure comprises 180 residues: GTP cyclohydrolase 1 (180 aa).

Zn(2+)-binding residues include Cys-71, His-74, and Cys-142.

Belongs to the GTP cyclohydrolase I family. In terms of assembly, toroid-shaped homodecamer, composed of two pentamers of five dimers.

It carries out the reaction GTP + H2O = 7,8-dihydroneopterin 3'-triphosphate + formate + H(+). It functions in the pathway cofactor biosynthesis; 7,8-dihydroneopterin triphosphate biosynthesis; 7,8-dihydroneopterin triphosphate from GTP: step 1/1. In Helicobacter acinonychis (strain Sheeba), this protein is GTP cyclohydrolase 1.